The following is a 332-amino-acid chain: Glycerol-3-phosphate dehydrogenase [NAD(P)+] (332 aa).

Trp13, Arg33, and Lys107 together coordinate NADPH. Sn-glycerol 3-phosphate-binding residues include Lys107, Gly136, and Ser138. Ala140 provides a ligand contact to NADPH. Lys191, Asp244, Ser254, Arg255, and Asn256 together coordinate sn-glycerol 3-phosphate. Lys191 serves as the catalytic Proton acceptor. Position 255 (Arg255) interacts with NADPH. Position 280 (Glu280) interacts with NADPH.

Belongs to the NAD-dependent glycerol-3-phosphate dehydrogenase family.

It is found in the cytoplasm. The catalysed reaction is sn-glycerol 3-phosphate + NAD(+) = dihydroxyacetone phosphate + NADH + H(+). It carries out the reaction sn-glycerol 3-phosphate + NADP(+) = dihydroxyacetone phosphate + NADPH + H(+). Its pathway is membrane lipid metabolism; glycerophospholipid metabolism. Its function is as follows. Catalyzes the reduction of the glycolytic intermediate dihydroxyacetone phosphate (DHAP) to sn-glycerol 3-phosphate (G3P), the key precursor for phospholipid synthesis. In Alkalilimnicola ehrlichii (strain ATCC BAA-1101 / DSM 17681 / MLHE-1), this protein is Glycerol-3-phosphate dehydrogenase [NAD(P)+].